The primary structure comprises 715 residues: Fatty acid oxidation complex subunit alpha (715 aa).

An enoyl-CoA hydratase region spans residues 1–190 (MTTTSAFMLN…KAGLVDDVVP (190 aa)). Residues 306–715 (GPLNSVGILG…WTNGETDQGN (410 aa)) are 3-hydroxyacyl-CoA dehydrogenase.

It in the N-terminal section; belongs to the enoyl-CoA hydratase/isomerase family. In the central section; belongs to the 3-hydroxyacyl-CoA dehydrogenase family. In terms of assembly, heterotetramer of two alpha chains (FadJ) and two beta chains (FadI).

The protein localises to the cytoplasm. The catalysed reaction is a (3S)-3-hydroxyacyl-CoA = a (2E)-enoyl-CoA + H2O. The enzyme catalyses a 4-saturated-(3S)-3-hydroxyacyl-CoA = a (3E)-enoyl-CoA + H2O. It carries out the reaction a (3S)-3-hydroxyacyl-CoA + NAD(+) = a 3-oxoacyl-CoA + NADH + H(+). It catalyses the reaction (3S)-3-hydroxybutanoyl-CoA = (3R)-3-hydroxybutanoyl-CoA. Its pathway is lipid metabolism; fatty acid beta-oxidation. In terms of biological role, catalyzes the formation of a hydroxyacyl-CoA by addition of water on enoyl-CoA. Also exhibits 3-hydroxyacyl-CoA epimerase and 3-hydroxyacyl-CoA dehydrogenase activities. The sequence is that of Fatty acid oxidation complex subunit alpha from Salmonella dublin (strain CT_02021853).